A 250-amino-acid polypeptide reads, in one-letter code: ATP synthase subunit a (250 aa).

The next 6 helical transmembrane spans lie at 29-49 (ASLF…FATS), 84-104 (FFPL…LGMF), 114-134 (IIVT…YGFY), 143-163 (VFVP…IEII), 193-213 (FVAS…LPLI), and 216-236 (VALT…FAVL).

This sequence belongs to the ATPase A chain family. In terms of assembly, F-type ATPases have 2 components, CF(1) - the catalytic core - and CF(0) - the membrane proton channel. CF(1) has five subunits: alpha(3), beta(3), gamma(1), delta(1), epsilon(1). CF(0) has three main subunits: a(1), b(2) and c(9-12). The alpha and beta chains form an alternating ring which encloses part of the gamma chain. CF(1) is attached to CF(0) by a central stalk formed by the gamma and epsilon chains, while a peripheral stalk is formed by the delta and b chains.

Its subcellular location is the cell inner membrane. Functionally, key component of the proton channel; it plays a direct role in the translocation of protons across the membrane. The sequence is that of ATP synthase subunit a from Rhizobium johnstonii (strain DSM 114642 / LMG 32736 / 3841) (Rhizobium leguminosarum bv. viciae).